The primary structure comprises 164 residues: Seripauperin-21 (164 aa).

Belongs to the SRP1/TIP1 family. Seripauperin subfamily.

The polypeptide is Seripauperin-21 (PAU21) (Saccharomyces cerevisiae (strain ATCC 204508 / S288c) (Baker's yeast)).